The chain runs to 1074 residues: BRD4-interacting chromatin-remodeling complex-associated protein-like (1074 aa).

Disordered regions lie at residues Ala542 to Gly603, Thr620 to Arg689, Thr834 to Phe874, and Gly887 to Pro952. Polar residues-rich tracts occupy residues Ser544–Arg576, Ala591–Gly603, Thr620–Thr629, and Gly660–Gln680. Ser621 is modified (phosphoserine). Composition is skewed to basic and acidic residues over residues Ile889–Arg904, Pro913–Lys925, and Glu934–Glu948. A Phosphoserine modification is found at Ser976.

In terms of assembly, component of the multiprotein chromatin-remodeling complexes SWI/SNF: SWI/SNF-A (BAF), SWI/SNF-B (PBAF) and related complexes. The canonical complex contains a catalytic subunit (either SMARCA4/BRG1/BAF190A or SMARCA2/BRM/BAF190B) and at least SMARCE1, ACTL6A/BAF53, SMARCC1/BAF155, SMARCC2/BAF170, and SMARCB1/SNF5/BAF47. Other subunits specific to each of the complexes may also be present permitting several possible combinations developmentally and tissue specific. Component of the SWI/SNF (GBAF) subcomplex, which includes at least BICRA or BICRAL (mutually exclusive), BRD9, SS18, the core BAF subunits, SMARCA2/BRM, SMARCA4/BRG1/BAF190A, ACTL6A/BAF53, SMARCC1/BAF155, and SMARCD1/BAF60A.

In terms of biological role, component of SWI/SNF chromatin remodeling subcomplex GBAF that carries out key enzymatic activities, changing chromatin structure by altering DNA-histone contacts within a nucleosome in an ATP-dependent manner. The chain is BRD4-interacting chromatin-remodeling complex-associated protein-like from Mus musculus (Mouse).